The following is a 226-amino-acid chain: MIPSSYPSAEEIARLSARMLLEIGAVNFNTDEPYTLASGLPSPSYIDCRKLISFPRIRSTLMDFMAVTVMRNAGFEAFDNIAGGETAGIPFAALVAERLALPMTYVRKKPKGYGRNARIEGAMSEGERVLLVEDLTTDGGSKLSFVDAIRETGATCGHTAVIFYYDIFPETTKTLGDHGVQLHYLCTWWDVLAEARAQAAFSTETLDEVEKFLRDPRAWQEANKKT.

5-phospho-alpha-D-ribose 1-diphosphate contacts are provided by residues Arg-107, Lys-108, Lys-111, and 133 to 141 (EDLTTDGGS). Thr-137 contributes to the orotate binding site.

Belongs to the purine/pyrimidine phosphoribosyltransferase family. PyrE subfamily. In terms of assembly, homodimer. Mg(2+) is required as a cofactor.

The enzyme catalyses orotidine 5'-phosphate + diphosphate = orotate + 5-phospho-alpha-D-ribose 1-diphosphate. Its pathway is pyrimidine metabolism; UMP biosynthesis via de novo pathway; UMP from orotate: step 1/2. Functionally, catalyzes the transfer of a ribosyl phosphate group from 5-phosphoribose 1-diphosphate to orotate, leading to the formation of orotidine monophosphate (OMP). This chain is Orotate phosphoribosyltransferase, found in Ruegeria sp. (strain TM1040) (Silicibacter sp.).